The primary structure comprises 751 residues: Oxysterol-binding protein-related protein 11 (751 aa).

Position 1 is an N-acetylmethionine (M1). The segment at 1-57 (MQGGEPASVMKVSESEGKLEGLATAVTPNKNSGNSSCGGAISSSSSNSSRGGSAKGW) is disordered. Phosphoserine is present on S15. T27 is subject to Phosphothreonine. Positions 31-52 (NSGNSSCGGAISSSSSNSSRGG) are enriched in low complexity. A PH domain is found at 63–160 (MESVNGYLMK…WVSRLQICTQ (98 aa)). 6 positions are modified to phosphoserine: S177, S179, S182, S186, S189, and S194. 2 disordered regions span residues 475–497 (SGVSSSSSTPAITDHAPLPEEAP) and 694–716 (EIDKATEHKRSLEERQRTEERLR).

The protein belongs to the OSBP family. Heterodimer with OSBPL9.

The protein localises to the late endosome membrane. The protein resides in the golgi apparatus. Its subcellular location is the trans-Golgi network membrane. It carries out the reaction a 1,2-diacyl-sn-glycero-3-phospho-(1D-myo-inositol 4-phosphate)(out) + a 1,2-diacyl-sn-glycero-3-phospho-L-serine(in) = a 1,2-diacyl-sn-glycero-3-phospho-(1D-myo-inositol 4-phosphate)(in) + a 1,2-diacyl-sn-glycero-3-phospho-L-serine(out). In terms of biological role, plays a role in regulating ADIPOQ and FABP4 levels in differentiating adipocytes and is also involved in regulation of adipocyte triglyceride storage. Weakly binds 25-hydroxycholesterol. Interacts with OSBPL9 to function as lipid transfer proteins. Together they form a heterodimer that localizes at the ER-trans-Golgi membrane contact sites, and exchanges phosphatidylserine (1,2-diacyl-sn-glycero-3-phospho-L-serine, PS) for phosphatidylinositol-4-phosphate (1,2-diacyl-sn-glycero-3-phospho-(1D-myo-inositol 4-phosphate), PI(4)P) between the two organelles, a step that is critical for sphingomyelin synthesis in the Golgi complex. The protein is Oxysterol-binding protein-related protein 11 (Osbpl11) of Mus musculus (Mouse).